Here is a 136-residue protein sequence, read N- to C-terminus: Keratin-associated protein 15-1 (136 aa).

It belongs to the PMG family. Interacts with hair keratins.

Functionally, in the hair cortex, hair keratin intermediate filaments are embedded in an interfilamentous matrix, consisting of hair keratin-associated proteins (KRTAP), which are essential for the formation of a rigid and resistant hair shaft through their extensive disulfide bond cross-linking with abundant cysteine residues of hair keratins. The matrix proteins include the high-sulfur and high-glycine-tyrosine keratins. This Capra hircus (Goat) protein is Keratin-associated protein 15-1 (KRTAP15-1).